A 114-amino-acid polypeptide reads, in one-letter code: Phosphorelay protein LuxU (114 aa).

The HPt domain occupies 19-114 (GSDNVPVLLD…TRDAYRSWTN (96 aa)). The residue at position 58 (His-58) is a Phosphohistidine.

Monomer.

Functionally, phosphorelay protein which receives sensory signals from LuxN and LuxP and transmits them to LuxO, at low cell density. LuxN and LuxP transfer a phosphoryl group to LuxU on His-58 and this phosphoryl group is further transferred to LuxO. At high cell density, as LuxU could function to establish an equilibrium between the aspartyl-phosphate of LuxN and the aspartyl-phosphate of LuxO, LuxU transfers phosphate from LuxO to LuxN (and probably LuxP) and finally phosphate is drained from the system. The polypeptide is Phosphorelay protein LuxU (luxU) (Vibrio harveyi (Beneckea harveyi)).